The primary structure comprises 314 residues: Small ribosomal subunit protein RACK1 (314 aa).

T10 is modified (phosphothreonine). One copy of the WD 1 repeat lies at 13–44; the sequence is GHSGWVTSLSTAPENPDILLSGSRDKSIILWN. Position 39 is a phosphoserine (S39). Y52 carries the post-translational modification Phosphotyrosine. WD repeat units lie at residues 61-91, 103-133, 146-178, 190-220, 231-260, and 281-311; these read GHSHFVSDCALSFDSHYALSASWDKTIRLWD, GHTSDVLSVSISPDNRQVVSGSRDKTIKIWN, GHSDWVSCVRFSPNPDNLTFVSAGWDKAVKVWD, GHTGYVSAVTISPDGSLCASGGRDGTLMLWD, EAKANINALVFSPNRYWLCAATGSSIRIFD, and SSEPECISLTWSPDGQTLFSGWTDNLIRVWQ. The residue at position 148 (S148) is a Phosphoserine. Phosphoserine occurs at positions 242 and 255.

Belongs to the WD repeat G protein beta family. Ribosomal protein RACK1 subfamily. Component of the small ribosomal subunit (SSU). Mature yeast ribosomes consist of a small (40S) and a large (60S) subunit. The 40S small subunit contains 1 molecule of ribosomal RNA (18S rRNA) and at least 33 different proteins. The large 60S subunit contains 3 rRNA molecules (25S, 5.8S and 5S rRNA) and at least 46 different proteins. RACK1 is located at the head of the SSU in the vicinity of the mRNA exit channel. RACK1 interacts with the mRNA-binding protein SCP16. RACK1 also exists simultaneously as a homodimer in a cytosolic non-ribosome-bound form. Interacts with pck2. Interacts with pat1/ran1.

The protein resides in the cytoplasm. The protein localises to the membrane. Component of the ribosome, a large ribonucleoprotein complex responsible for the synthesis of proteins in the cell. The small ribosomal subunit (SSU) binds messenger RNAs (mRNAs) and translates the encoded message by selecting cognate aminoacyl-transfer RNA (tRNA) molecules. The large subunit (LSU) contains the ribosomal catalytic site termed the peptidyl transferase center (PTC), which catalyzes the formation of peptide bonds, thereby polymerizing the amino acids delivered by tRNAs into a polypeptide chain. The nascent polypeptides leave the ribosome through a tunnel in the LSU and interact with protein factors that function in enzymatic processing, targeting, and the membrane insertion of nascent chains at the exit of the ribosomal tunnel. Located at the head of the 40S ribosomal subunit in the vicinity of the mRNA exit channel, RACK1 serves as a scaffold protein that can recruit other proteins to the ribosome. Involved in induction of the ribosome quality control (RQC) pathway; a pathway that degrades nascent peptide chains during problematic translation. Involved in the negative regulation of translation of a specific subset of proteins. May be a receptor for protein kinase C in the regulation of actin cytoskeleton organization during cell wall synthesis and morphogenesis. Involved in the control of G2/M transition. May function as an anchoring protein for pat1/ran1 kinase. Negatively regulates the cell integrity transduction pathway by favoring translation of the tyrosine-phosphatases pyp1 and pyp2 that deactivate pmk1. Positively regulates the synthesis of the stress-responsive transcription factor Atf1 and the cytoplasmic catalase, a detoxificant enzyme induced by treatment with hydrogen peroxide. The polypeptide is Small ribosomal subunit protein RACK1 (Schizosaccharomyces pombe (strain 972 / ATCC 24843) (Fission yeast)).